Reading from the N-terminus, the 539-residue chain is CTP synthase (539 aa).

Positions 1 to 268 are amidoligase domain; it reads MSFKCIFLTG…STFITEKLGL (268 aa). Residue serine 14 coordinates CTP. Serine 14 serves as a coordination point for UTP. Residue 15–20 coordinates ATP; the sequence is SLGKGL. Residue tyrosine 55 participates in L-glutamine binding. Aspartate 72 contributes to the ATP binding site. The Mg(2+) site is built by aspartate 72 and glutamate 142. CTP-binding positions include 149 to 151, 188 to 193, and lysine 224; these read DIE and KTKPTQ. Residues 188-193 and lysine 224 each bind UTP; that span reads KTKPTQ. One can recognise a Glutamine amidotransferase type-1 domain in the interval 294–533; the sequence is RIGLVGKYVQ…IQAAILYSRN (240 aa). Glycine 353 lines the L-glutamine pocket. The Nucleophile; for glutamine hydrolysis role is filled by cysteine 380. L-glutamine is bound by residues 381 to 384, glutamate 404, and arginine 461; that span reads LGMQ. Catalysis depends on residues histidine 506 and glutamate 508.

It belongs to the CTP synthase family. As to quaternary structure, homotetramer.

The catalysed reaction is UTP + L-glutamine + ATP + H2O = CTP + L-glutamate + ADP + phosphate + 2 H(+). The enzyme catalyses L-glutamine + H2O = L-glutamate + NH4(+). It catalyses the reaction UTP + NH4(+) + ATP = CTP + ADP + phosphate + 2 H(+). It functions in the pathway pyrimidine metabolism; CTP biosynthesis via de novo pathway; CTP from UDP: step 2/2. Its activity is regulated as follows. Allosterically activated by GTP, when glutamine is the substrate; GTP has no effect on the reaction when ammonia is the substrate. The allosteric effector GTP functions by stabilizing the protein conformation that binds the tetrahedral intermediate(s) formed during glutamine hydrolysis. Inhibited by the product CTP, via allosteric rather than competitive inhibition. In terms of biological role, catalyzes the ATP-dependent amination of UTP to CTP with either L-glutamine or ammonia as the source of nitrogen. Regulates intracellular CTP levels through interactions with the four ribonucleotide triphosphates. The chain is CTP synthase from Chlamydia felis (strain Fe/C-56) (Chlamydophila felis).